Here is a 644-residue protein sequence, read N- to C-terminus: Protein lin-9 (644 aa).

The segment at 1 to 77 is disordered; sequence MSSAVRSPRK…GRDSPSVNSL (77 aa). The segment covering 50 to 62 has biased composition (basic residues); it reads SIKRTGSPKKSPA.

This sequence belongs to the lin-9 family. In terms of assembly, component of the DRM complex, at least composed of lin-9, lin-35, lin-37, lin-52, lin-53, lin-54- dpl-1 and efl-1. Interacts with zft-11; the interaction is required to suppress the activation of non-neuronal genes in neurons.

It localises to the nucleus. Its function is as follows. Synthetic multivulva class B (synMuvB) protein. SynMuvB proteins are required to repress the induction of vulval development by Ras signaling and probably act by forming the multiprotein DRM complex that represses transcription. Required for the development of sheath cells in the hermaphrodite gonad and for the development of the male spicule, rays and gonad. In association with the zinc finger protein ztf-11, negatively regulates the expression of non-neuronal genes during neurogenesis. This is Protein lin-9 from Caenorhabditis elegans.